The sequence spans 81 residues: Three-finger toxin 3FTx-Oxy6 (81 aa).

A signal peptide spans 1-21 (MKTLLLSLVVMTIVYLDLGYT). Intrachain disulfides connect Cys-24/Cys-43, Cys-36/Cys-61, Cys-65/Cys-73, and Cys-74/Cys-79.

This sequence belongs to the three-finger toxin family. Short-chain subfamily. In terms of tissue distribution, expressed by the venom gland.

The protein localises to the secreted. The chain is Three-finger toxin 3FTx-Oxy6 from Oxyuranus microlepidotus (Inland taipan).